Consider the following 358-residue polypeptide: Magnesium-protoporphyrin IX monomethyl ester [oxidative] cyclase 3 (358 aa).

This sequence belongs to the AcsF family. The cofactor is Fe cation.

It carries out the reaction Mg-protoporphyrin IX 13-monomethyl ester + 3 NADPH + 3 O2 + 2 H(+) = 3,8-divinyl protochlorophyllide a + 3 NADP(+) + 5 H2O. It participates in porphyrin-containing compound metabolism; chlorophyll biosynthesis (light-independent). Catalyzes the formation of the isocyclic ring in chlorophyll biosynthesis. Mediates the cyclase reaction, which results in the formation of divinylprotochlorophyllide (Pchlide) characteristic of all chlorophylls from magnesium-protoporphyrin IX 13-monomethyl ester (MgPMME). This chain is Magnesium-protoporphyrin IX monomethyl ester [oxidative] cyclase 3, found in Nostoc sp. (strain PCC 7120 / SAG 25.82 / UTEX 2576).